The sequence spans 553 residues: Transcription factor MYB65 (553 aa).

A disordered region spans residues 1–44 (MSYTTATADSDDGMHSSIHNESPAPDSISNGCRSRGKRSVLKKG). 2 consecutive HTH myb-type domains span residues 38–90 (RSVL…ANHL) and 91–145 (RPNL…KRRQ). DNA-binding regions (H-T-H motif) lie at residues 66 to 90 (WNAV…ANHL) and 118 to 141 (WAQM…NTRI).

Mostly expressed in roots (e.g. root tips), stems, pollen, shoot apices, flowers and floral shoot tips, and, to a lower extent, in leaves and siliques.

The protein resides in the nucleus. Its function is as follows. Transcriptional activator of alpha-amylase expression that binds to 5'-CAACTGTC-3' motif in target gene promoter. In vegetative tissues, inhibits growth by reducing cell proliferation. Promotes the expression of aleurone-related genes (e.g. CP1, CP, GASA1, BXL1 and BXL2) in seeds. Together with MYB33 and MYB101, promotes the programmed cell death (PCD) the vacuolation of protein storage vacuoles (PSVs) in the aleurone layers during seed germination. Together with MYB33, facilitates anther and tapetum development. In Arabidopsis thaliana (Mouse-ear cress), this protein is Transcription factor MYB65.